Here is a 206-residue protein sequence, read N- to C-terminus: dTTP/UTP pyrophosphatase (206 aa).

The active-site Proton acceptor is Asp-79.

This sequence belongs to the Maf family. YhdE subfamily. The cofactor is a divalent metal cation.

Its subcellular location is the cytoplasm. The enzyme catalyses dTTP + H2O = dTMP + diphosphate + H(+). The catalysed reaction is UTP + H2O = UMP + diphosphate + H(+). Nucleoside triphosphate pyrophosphatase that hydrolyzes dTTP and UTP. May have a dual role in cell division arrest and in preventing the incorporation of modified nucleotides into cellular nucleic acids. The polypeptide is dTTP/UTP pyrophosphatase (Rhizobium etli (strain ATCC 51251 / DSM 11541 / JCM 21823 / NBRC 15573 / CFN 42)).